The following is a 218-amino-acid chain: Thyroid hormone receptor alpha (218 aa).

Positions 1 to 215 (PEDIGQSPGV…PPLFLEVFED (215 aa)) constitute an NR LBD domain. The 3,3',5-triiodo-L-thyronine site is built by Arg-36 and Ser-85.

It belongs to the nuclear hormone receptor family. NR1 subfamily.

Its subcellular location is the nucleus. Nuclear hormone receptor that can act as a repressor or activator of transcription. High affinity receptor for thyroid hormones, including triiodothyronine and thyroxine. The sequence is that of Thyroid hormone receptor alpha (thra) from Oncorhynchus mykiss (Rainbow trout).